The following is a 61-amino-acid chain: Small ribosomal subunit protein uS14 (61 aa).

Zn(2+) contacts are provided by Cys-24, Cys-27, Cys-40, and Cys-43.

It belongs to the universal ribosomal protein uS14 family. Zinc-binding uS14 subfamily. As to quaternary structure, part of the 30S ribosomal subunit. Contacts proteins S3 and S10. The cofactor is Zn(2+).

Its function is as follows. Binds 16S rRNA, required for the assembly of 30S particles and may also be responsible for determining the conformation of the 16S rRNA at the A site. This is Small ribosomal subunit protein uS14 from Nautilia profundicola (strain ATCC BAA-1463 / DSM 18972 / AmH).